The sequence spans 375 residues: Aminomethyltransferase (375 aa).

It belongs to the GcvT family. The glycine cleavage system is composed of four proteins: P, T, L and H.

It carries out the reaction N(6)-[(R)-S(8)-aminomethyldihydrolipoyl]-L-lysyl-[protein] + (6S)-5,6,7,8-tetrahydrofolate = N(6)-[(R)-dihydrolipoyl]-L-lysyl-[protein] + (6R)-5,10-methylene-5,6,7,8-tetrahydrofolate + NH4(+). Its function is as follows. The glycine cleavage system catalyzes the degradation of glycine. This chain is Aminomethyltransferase, found in Ralstonia nicotianae (strain ATCC BAA-1114 / GMI1000) (Ralstonia solanacearum).